Here is a 140-residue protein sequence, read N- to C-terminus: Putative pre-16S rRNA nuclease (140 aa).

The protein belongs to the YqgF nuclease family.

Its subcellular location is the cytoplasm. Could be a nuclease involved in processing of the 5'-end of pre-16S rRNA. The polypeptide is Putative pre-16S rRNA nuclease (Mannheimia succiniciproducens (strain KCTC 0769BP / MBEL55E)).